The following is a 147-amino-acid chain: Hemoglobin subunit beta (147 aa).

Positions 3–147 (EWTDDERAII…VVSALGRQYH (145 aa)) constitute a Globin domain. Residues histidine 64 and histidine 93 each contribute to the heme b site.

This sequence belongs to the globin family. In terms of assembly, heterotetramer of two alpha chains and two beta chains. As to expression, red blood cells.

Its function is as follows. Involved in oxygen transport from gills to the various peripheral tissues. The polypeptide is Hemoglobin subunit beta (hbb) (Melanogrammus aeglefinus (Haddock)).